Reading from the N-terminus, the 96-residue chain is Glutamyl-tRNA(Gln) amidotransferase subunit C (96 aa).

This sequence belongs to the GatC family. Heterotrimer of A, B and C subunits.

It catalyses the reaction L-glutamyl-tRNA(Gln) + L-glutamine + ATP + H2O = L-glutaminyl-tRNA(Gln) + L-glutamate + ADP + phosphate + H(+). The enzyme catalyses L-aspartyl-tRNA(Asn) + L-glutamine + ATP + H2O = L-asparaginyl-tRNA(Asn) + L-glutamate + ADP + phosphate + 2 H(+). Its function is as follows. Allows the formation of correctly charged Asn-tRNA(Asn) or Gln-tRNA(Gln) through the transamidation of misacylated Asp-tRNA(Asn) or Glu-tRNA(Gln) in organisms which lack either or both of asparaginyl-tRNA or glutaminyl-tRNA synthetases. The reaction takes place in the presence of glutamine and ATP through an activated phospho-Asp-tRNA(Asn) or phospho-Glu-tRNA(Gln). In Halalkalibacterium halodurans (strain ATCC BAA-125 / DSM 18197 / FERM 7344 / JCM 9153 / C-125) (Bacillus halodurans), this protein is Glutamyl-tRNA(Gln) amidotransferase subunit C.